Consider the following 335-residue polypeptide: Nucleoid-associated protein PputW619_4243 (335 aa).

The protein belongs to the YejK family.

It localises to the cytoplasm. The protein resides in the nucleoid. In Pseudomonas putida (strain W619), this protein is Nucleoid-associated protein PputW619_4243.